The chain runs to 292 residues: AKT-interacting protein (292 aa).

Over residues Met-1–Ser-11 the composition is skewed to polar residues. A disordered region spans residues Met-1–Asn-64. Over residues Lys-14–Leu-23 the composition is skewed to basic and acidic residues. Residue Ser-30 is modified to Phosphoserine. Residues Tyr-74–Ala-222 enclose the UBC core domain.

The protein belongs to the ubiquitin-conjugating enzyme family. FTS subfamily. In terms of assembly, component of the FTS/Hook/FHIP complex (FHF complex), composed of AKTIP/FTS, FHIP1B, and one or more members of the Hook family of proteins HOOK1, HOOK2, and HOOK3. Interacts directly with HOOK1, HOOK2 and HOOK3. The FHF complex associates with the homotypic vesicular sorting complex (the HOPS complex). Also interacts with AKT1. May interact with FHIP1A.

Its subcellular location is the cytoplasm. It is found in the cell membrane. In terms of biological role, component of the FTS/Hook/FHIP complex (FHF complex). The FHF complex may function to promote vesicle trafficking and/or fusion via the homotypic vesicular protein sorting complex (the HOPS complex). Regulates apoptosis by enhancing phosphorylation and activation of AKT1. Increases release of TNFSF6 via the AKT1/GSK3B/NFATC1 signaling cascade. FHF complex promotes the distribution of AP-4 complex to the perinuclear area of the cell. This is AKT-interacting protein (Aktip) from Rattus norvegicus (Rat).